The sequence spans 1260 residues: Ankyrin repeat and sterile alpha motif domain-containing protein 1B (1260 aa).

7 ANK repeats span residues 2 to 31 (GKDQ…GGIL), 58 to 87 (SGYT…STNV), 91 to 120 (KGYF…SHSR), 127 to 156 (ENET…DPTI), 160 to 189 (KLET…NLMS), 193 to 222 (RKHT…DVSC), and 225 to 254 (EKGS…DANI). The tract at residues 298–326 (HAQEDTAQETRLSSPAQSPSQKTKSETVT) is disordered. Residues 306 to 326 (ETRLSSPAQSPSQKTKSETVT) are compositionally biased toward polar residues. A phosphoserine mark is found at Ser-310, Ser-311, Ser-315, Ser-354, and Ser-365. 3 disordered regions span residues 368–402 (ELGK…SCGP), 491–513 (PGTG…PSPD), and 556–642 (GCTS…EASL). Residues 372–385 (NGSQSVRTSSTINL) show a composition bias toward polar residues. Phosphothreonine is present on Thr-504. Ser-508 and Ser-511 each carry phosphoserine. The segment covering 556 to 575 (GCTSFTSSPPVSPPTSSVET) has biased composition (low complexity). Over residues 576–588 (TEIKNEGAEHTDD) the composition is skewed to basic and acidic residues. Ser-739 bears the Phosphoserine mark. Residues 754-778 (VNWSKSSTAERSSKDNSERTPSFTS) form a disordered region. The residue at position 773 (Thr-773) is a Phosphothreonine. At Ser-775 the chain carries Phosphoserine. 2 SAM domains span residues 810–876 (CPVQ…LPKM) and 884–949 (YHPT…RLHE). Tyr-901 bears the Phosphotyrosine mark. Positions 935-938 (HRKR) match the Nuclear localization signal motif. The interval 946-989 (RLHEDPPQKPPRSITLREPSGNHTPPQLSPSLSQSTYTTGGSLD) is disordered. Residues 969–984 (TPPQLSPSLSQSTYTT) are compositionally biased toward low complexity. Phosphoserine is present on Ser-974. Tyr-1007 is subject to Phosphotyrosine. The PID domain occupies 1056-1213 (IFQSCDYKAF…SFENKPSKPI (158 aa)). Residues 1197-1217 (HSSTLPESFENKPSKPIPKPR) form a disordered region.

In terms of assembly, interacts with EPHA8. Isoform 2 interacts with COIL. Isoform 3 interacts with DLG4. Nuclear translocation of isoform 3 requires an NMDAR-dependent proteolytic cleavage. A 35 kDa N-terminal form shuttles to the nucleus. As to expression, isoform 3 is brain specific and highly enriched in the postsynaptic densities (PSDs), especially in cortical, striatal and hippocampal PSDs.

The protein resides in the cytoplasm. Its subcellular location is the nucleus. It localises to the postsynaptic density. The protein localises to the cell projection. It is found in the dendritic spine. The protein resides in the cajal body. In terms of biological role, isoform 2 may participate in the regulation of nucleoplasmic coilin protein interactions in neuronal and transformed cells. Functionally, isoform 3 can regulate global protein synthesis by altering nucleolar numbers. This is Ankyrin repeat and sterile alpha motif domain-containing protein 1B (Anks1b) from Rattus norvegicus (Rat).